A 563-amino-acid chain; its full sequence is Calnexin homolog (563 aa).

A signal peptide spans 1 to 23; the sequence is MRFNAAITGALVSSATLMGQAHA. Residues 24–493 are Lumenal-facing; that stretch reads EETEKKADAT…PINAVKQVPE (470 aa). Residue Asp98 coordinates Ca(2+). Cys141 and Cys175 form a disulfide bridge. The an alpha-D-glucoside site is built by Tyr145, Lys147, Tyr166, and Asp173. Asn236 carries an N-linked (GlcNAc...) asparagine glycan. The tract at residues 241–323 is disordered; that stretch reads EDFAPPVNPE…EKPEDWDDEE (83 aa). Positions 249–279 are enriched in basic and acidic residues; sequence PEKEIDDPKDKKPADWVDEAKIPDPEAKKPD. The interval 253–386 is p domain (Extended arm); the sequence is IDDPKDKKPA…RKIPNPAYFE (134 aa). Residues 280–305 are compositionally biased toward acidic residues; sequence DWDEDAPYEIVDEEATMPEDWLEDEP. Cys337 and Cys343 are oxidised to a cystine. Glu402 is a binding site for an alpha-D-glucoside. Asp413 is a Ca(2+) binding site. A helical membrane pass occupies residues 494–514; sequence VAGGLGALLLTMILVIVGAVG. Over 515-563 the chain is Cytoplasmic; sequence ASSPAPAAAAKKGKEAASAAKEKASEAVSSAADTAKGAATKRNTRSSAQ. The segment at 521–563 is disordered; sequence AAAAKKGKEAASAAKEKASEAVSSAADTAKGAATKRNTRSSAQ. Positions 526–539 are enriched in basic and acidic residues; it reads KGKEAASAAKEKAS.

It belongs to the calreticulin family.

The protein resides in the endoplasmic reticulum membrane. Interacts with newly synthesized monoglucosylated glycoproteins in the endoplasmic reticulum. It may act in assisting protein assembly and/or in the retention within the ER of unassembled protein subunits. It seems to play a major role in the quality control apparatus of the ER by the retention of incorrectly folded proteins. This chain is Calnexin homolog, found in Aspergillus fumigatus (strain ATCC MYA-4609 / CBS 101355 / FGSC A1100 / Af293) (Neosartorya fumigata).